The sequence spans 634 residues: Threonine--tRNA ligase (634 aa).

Positions 1-61 (MINIRFPDGS…NSNCELRLIT (61 aa)) constitute a TGS domain. The catalytic stretch occupies residues 241–532 (DHRKIGKVLD…LIEHYAGNLP (292 aa)). Zn(2+) contacts are provided by Cys332, His383, and His509.

Belongs to the class-II aminoacyl-tRNA synthetase family. In terms of assembly, homodimer. Requires Zn(2+) as cofactor.

The protein localises to the cytoplasm. The enzyme catalyses tRNA(Thr) + L-threonine + ATP = L-threonyl-tRNA(Thr) + AMP + diphosphate + H(+). Functionally, catalyzes the attachment of threonine to tRNA(Thr) in a two-step reaction: L-threonine is first activated by ATP to form Thr-AMP and then transferred to the acceptor end of tRNA(Thr). Also edits incorrectly charged L-seryl-tRNA(Thr). The sequence is that of Threonine--tRNA ligase from Francisella tularensis subsp. mediasiatica (strain FSC147).